The following is a 411-amino-acid chain: Alpha-1-antiproteinase (411 aa).

The N-terminal stretch at 1-24 (MAPSISRGLLLLAALCCLAPSFLA) is a signal peptide. Ser33 carries the phosphoserine modification. Residues Asn64, Asn101, and Asn265 are each glycosylated (N-linked (GlcNAc...) asparagine). Residues 367–386 (GATVVEAVPMSLPPQVKFDH) are RCL. Ser377 bears the Phosphoserine mark.

The protein belongs to the serpin family. In terms of assembly, interacts with CELA2A. Interacts with ERGIC3 and LMAN1/ERGIC53. Interacts with PRSS1/Trypsin. Plasma.

The protein resides in the secreted. Inhibitor of serine proteases. The primary target is elastase, but also has a moderate affinity for plasmin and thrombin. The protein is Alpha-1-antiproteinase (Serpina1) of Rattus norvegicus (Rat).